Here is a 208-residue protein sequence, read N- to C-terminus: MRKTLSILAISLPLLVSGYAQASESGVLKAKLAEISTLKANFTQTVTDVNKKEIQKGSGVFALAYPNQFYWHLTEPDESLIVADGRDVWIYNPFAEEVSVMDLNQAINASPIALLVHRDEETWSKYTVTNEEGCFSIAPKSVDAGVESVDVCFDGNTLTQMVLQDQQGNVSQFMLSDQTAISDDELSMFKFTVPDDVDIDDQRLNTVN.

Positions 1-22 (MRKTLSILAISLPLLVSGYAQA) are cleaved as a signal peptide.

The protein belongs to the LolA family. In terms of assembly, monomer.

Its subcellular location is the periplasm. Functionally, participates in the translocation of lipoproteins from the inner membrane to the outer membrane. Only forms a complex with a lipoprotein if the residue after the N-terminal Cys is not an aspartate (The Asp acts as a targeting signal to indicate that the lipoprotein should stay in the inner membrane). This Shewanella sediminis (strain HAW-EB3) protein is Outer-membrane lipoprotein carrier protein.